A 197-amino-acid chain; its full sequence is Holliday junction resolvase RecU (197 aa).

The disordered stretch occupies residues 1–21 (MVNYPSGVRAGGYPQKKKNQN). Positions 82, 84, 97, and 116 each coordinate Mg(2+).

The protein belongs to the RecU family. It depends on Mg(2+) as a cofactor.

The protein resides in the cytoplasm. It carries out the reaction Endonucleolytic cleavage at a junction such as a reciprocal single-stranded crossover between two homologous DNA duplexes (Holliday junction).. Its function is as follows. Endonuclease that resolves Holliday junction intermediates in genetic recombination. Cleaves mobile four-strand junctions by introducing symmetrical nicks in paired strands. Promotes annealing of linear ssDNA with homologous dsDNA. Required for DNA repair, homologous recombination and chromosome segregation. The polypeptide is Holliday junction resolvase RecU (Oenococcus oeni (strain ATCC BAA-331 / PSU-1)).